Consider the following 536-residue polypeptide: Adenine deaminase (536 aa).

A disordered region spans residues 1-24 (MTPSPHDLLHCGMNSQDRDETNGD).

It belongs to the metallo-dependent hydrolases superfamily. Adenine deaminase family. The cofactor is Mn(2+).

It catalyses the reaction adenine + H2O + H(+) = hypoxanthine + NH4(+). The polypeptide is Adenine deaminase (Deinococcus radiodurans (strain ATCC 13939 / DSM 20539 / JCM 16871 / CCUG 27074 / LMG 4051 / NBRC 15346 / NCIMB 9279 / VKM B-1422 / R1)).